The chain runs to 339 residues: Putative P2Y purinoceptor 10 (339 aa).

Residues 1 to 39 (MANLDKYTETFKMGSNSTSTAEIYCNVTNVKFQYSLYAT) lie on the Extracellular side of the membrane. N-linked (GlcNAc...) asparagine glycosylation is found at N16 and N26. The chain crosses the membrane as a helical span at residues 40–60 (TYILIFIPGLLANSAALWVLC). The Cytoplasmic portion of the chain corresponds to 61-68 (RFISKKNK). The helical transmembrane segment at 69–89 (AIIFMINLSVADLAHVLSLPL) threads the bilayer. The Extracellular portion of the chain corresponds to 90–103 (RIYYYISHHWPFQR). Residues 104–124 (ALCLLCFYLKYLNMYASICFL) traverse the membrane as a helical segment. Cysteines 106 and 181 form a disulfide. Residues 125-149 (TCISLQRCFFLLKPFRARDWKRRYD) lie on the Cytoplasmic side of the membrane. Residues 150 to 170 (VGISAAIWIVVGTACLPFPIL) form a helical membrane-spanning segment. Residues 171-193 (RSTDLNNNKSCFADLGYKQMNAV) are Extracellular-facing. N-linked (GlcNAc...) asparagine glycosylation occurs at N178. A helical membrane pass occupies residues 194 to 214 (ALVGMITVAELAGFVIPVIII). The Cytoplasmic segment spans residues 215-244 (AWCTWKTTISLRQPPMAFQGISERQKALRM). The chain crosses the membrane as a helical span at residues 245–265 (VFMCAAVFFICFTPYHINFIF). Residues 266 to 288 (YTMVKETIISSCPVVRIALYFHP) are Extracellular-facing. A helical transmembrane segment spans residues 289–309 (FCLCLASLCCLLDPILYYFMA). At 310-339 (SEFRDQLSRHGSSVTRSRLMSKESGSSMIG) the chain is on the cytoplasmic side.

The protein belongs to the G-protein coupled receptor 1 family. As to expression, weakly expressed in blood leukocytes.

It is found in the cell membrane. In terms of biological role, putative receptor for purines coupled to G-proteins. This Homo sapiens (Human) protein is Putative P2Y purinoceptor 10 (P2RY10).